Here is a 696-residue protein sequence, read N- to C-terminus: Elongation factor G (696 aa).

The tr-type G domain maps to 8 to 282 (DRTRNIGIMA…AVIDYLPSPL (275 aa)). GTP is bound by residues 17-24 (AHIDAGKT), 81-85 (DTPGH), and 135-138 (NKMD).

It belongs to the TRAFAC class translation factor GTPase superfamily. Classic translation factor GTPase family. EF-G/EF-2 subfamily.

It localises to the cytoplasm. Its function is as follows. Catalyzes the GTP-dependent ribosomal translocation step during translation elongation. During this step, the ribosome changes from the pre-translocational (PRE) to the post-translocational (POST) state as the newly formed A-site-bound peptidyl-tRNA and P-site-bound deacylated tRNA move to the P and E sites, respectively. Catalyzes the coordinated movement of the two tRNA molecules, the mRNA and conformational changes in the ribosome. This chain is Elongation factor G, found in Staphylococcus saprophyticus subsp. saprophyticus (strain ATCC 15305 / DSM 20229 / NCIMB 8711 / NCTC 7292 / S-41).